We begin with the raw amino-acid sequence, 183 residues long: Adenine phosphoribosyltransferase (183 aa).

This sequence belongs to the purine/pyrimidine phosphoribosyltransferase family. In terms of assembly, homodimer.

Its subcellular location is the cytoplasm. It catalyses the reaction AMP + diphosphate = 5-phospho-alpha-D-ribose 1-diphosphate + adenine. It participates in purine metabolism; AMP biosynthesis via salvage pathway; AMP from adenine: step 1/1. In terms of biological role, catalyzes a salvage reaction resulting in the formation of AMP, that is energically less costly than de novo synthesis. The sequence is that of Adenine phosphoribosyltransferase from Salmonella paratyphi C (strain RKS4594).